The sequence spans 78 residues: Alpha-amylase inhibitor Haim-1 (78 aa).

2 disulfides stabilise this stretch: Cys-11-Cys-27 and Cys-45-Cys-72.

In terms of biological role, inhibits mammalian alpha-amylases specifically but has no action on plant and microbial alpha-amylases. This chain is Alpha-amylase inhibitor Haim-1, found in Streptomyces griseosporeus.